The primary structure comprises 334 residues: MKVKVGINGYGTIGKRVAYAVSKQDDMELIGVTKTKPDFEAYLARERGIPVYAASEEFLPRFEKAGFEVAGTLSDLLENVDVIVDATPGGMGAKNKALYEKAGVKAIFQGGEKAEVAQVSFVAQANYEKALGKDYVRVVSCNTTGLTRTLSALQEYIDYVYAVMIRRAADPNDSKRGPVNAITPSVTVPSHHGPDVQTVIPINIETMAFVVPTTLMHVHSVMIELKKPITREDVIDIFENTTRVLLFEKERGFESTAQLIEFARDLHREWNNLYEIAVWKESISVKGNRLFYIQAVHQESDVVPENVDAIRAMFEMADKWESIRKTNKSLGILK.

NAD(+)-binding positions include 12–13 (TI) and Gly111. D-glyceraldehyde 3-phosphate is bound at residue 140-142 (SCN). Residue Cys141 is the Nucleophile of the active site. Arg167 provides a ligand contact to NAD(+). 192–193 (HG) lines the D-glyceraldehyde 3-phosphate pocket. An NAD(+)-binding site is contributed by Gln298.

This sequence belongs to the glyceraldehyde-3-phosphate dehydrogenase family. In terms of assembly, homotetramer.

The protein resides in the cytoplasm. It carries out the reaction D-glyceraldehyde 3-phosphate + phosphate + NADP(+) = (2R)-3-phospho-glyceroyl phosphate + NADPH + H(+). It catalyses the reaction D-glyceraldehyde 3-phosphate + phosphate + NAD(+) = (2R)-3-phospho-glyceroyl phosphate + NADH + H(+). It functions in the pathway carbohydrate degradation; glycolysis; pyruvate from D-glyceraldehyde 3-phosphate: step 1/5. In Thermococcus kodakarensis (strain ATCC BAA-918 / JCM 12380 / KOD1) (Pyrococcus kodakaraensis (strain KOD1)), this protein is Glyceraldehyde-3-phosphate dehydrogenase.